A 355-amino-acid polypeptide reads, in one-letter code: Alanine racemase (355 aa).

K34 acts as the Proton acceptor; specific for D-alanine in catalysis. K34 carries the post-translational modification N6-(pyridoxal phosphate)lysine. R133 provides a ligand contact to substrate. The active-site Proton acceptor; specific for L-alanine is Y249. M297 serves as a coordination point for substrate.

This sequence belongs to the alanine racemase family. Requires pyridoxal 5'-phosphate as cofactor.

It carries out the reaction L-alanine = D-alanine. The protein operates within amino-acid biosynthesis; D-alanine biosynthesis; D-alanine from L-alanine: step 1/1. Functionally, catalyzes the interconversion of L-alanine and D-alanine. May also act on other amino acids. The polypeptide is Alanine racemase (alr) (Rickettsia conorii (strain ATCC VR-613 / Malish 7)).